We begin with the raw amino-acid sequence, 100 residues long: Urease subunit gamma (100 aa).

Belongs to the urease gamma subunit family. Heterotrimer of UreA (gamma), UreB (beta) and UreC (alpha) subunits. Three heterotrimers associate to form the active enzyme.

Its subcellular location is the cytoplasm. It catalyses the reaction urea + 2 H2O + H(+) = hydrogencarbonate + 2 NH4(+). The protein operates within nitrogen metabolism; urea degradation; CO(2) and NH(3) from urea (urease route): step 1/1. This Mycobacteroides abscessus (strain ATCC 19977 / DSM 44196 / CCUG 20993 / CIP 104536 / JCM 13569 / NCTC 13031 / TMC 1543 / L948) (Mycobacterium abscessus) protein is Urease subunit gamma.